Reading from the N-terminus, the 701-residue chain is Protein SOSEKI 1 (701 aa).

The segment at 8 to 101 (LSAQVLYQLS…YVLRASELID (94 aa)) is DIX-like oligomerization domain. Disordered stretches follow at residues 238 to 262 (STVH…FSPG), 300 to 329 (LPPN…SLNE), 366 to 389 (PYNT…YRTK), and 538 to 575 (IASS…LASP). Basic and acidic residues predominate over residues 306–319 (STHEDNSFWRDSRS). Residues 658 to 687 (ILQECSICRRTFKPDSLQVHMRGCHPPQYA) form a C2HC/C3H-type zinc finger. Cys662, Cys665, His677, and Cys681 together coordinate Zn(2+).

It belongs to the SOSEKI family. In terms of assembly, homodimer. Forms long polymer filaments with other SOKs proteins polymers crucial for polar localization and biological activity. Zn(2+) is required as a cofactor.

It is found in the cell membrane. SOSEKI proteins locally interpret global polarity cues and can influence cell division orientation to coordinate cell polarization relative to body axes. This is Protein SOSEKI 1 from Physcomitrium patens (Spreading-leaved earth moss).